A 190-amino-acid chain; its full sequence is Holliday junction branch migration complex subunit RuvA (190 aa).

Residues 1–65 form a domain I region; sequence MIGNLSGIVD…ENVAQLYGFI (65 aa). The segment at 66-143 is domain II; the sequence is SKEEQQCLRL…KLEINNNNFH (78 aa). The flexible linker stretch occupies residues 144-147; it reads PINE. Positions 147 to 190 are domain III; that stretch reads EDALSALINLGYEKMKAYDTIKKYRPNLDTKDIIRMALKELSIL.

This sequence belongs to the RuvA family. As to quaternary structure, homotetramer. Forms an RuvA(8)-RuvB(12)-Holliday junction (HJ) complex. HJ DNA is sandwiched between 2 RuvA tetramers; dsDNA enters through RuvA and exits via RuvB. An RuvB hexamer assembles on each DNA strand where it exits the tetramer. Each RuvB hexamer is contacted by two RuvA subunits (via domain III) on 2 adjacent RuvB subunits; this complex drives branch migration. In the full resolvosome a probable DNA-RuvA(4)-RuvB(12)-RuvC(2) complex forms which resolves the HJ.

Its subcellular location is the cytoplasm. Functionally, the RuvA-RuvB-RuvC complex processes Holliday junction (HJ) DNA during genetic recombination and DNA repair, while the RuvA-RuvB complex plays an important role in the rescue of blocked DNA replication forks via replication fork reversal (RFR). RuvA specifically binds to HJ cruciform DNA, conferring on it an open structure. The RuvB hexamer acts as an ATP-dependent pump, pulling dsDNA into and through the RuvAB complex. HJ branch migration allows RuvC to scan DNA until it finds its consensus sequence, where it cleaves and resolves the cruciform DNA. The polypeptide is Holliday junction branch migration complex subunit RuvA (Wolbachia pipientis wMel).